Reading from the N-terminus, the 310-residue chain is Homoserine kinase (310 aa).

Residue 91–101 (PIGSGLGSSAC) participates in ATP binding.

It belongs to the GHMP kinase family. Homoserine kinase subfamily.

The protein localises to the cytoplasm. The enzyme catalyses L-homoserine + ATP = O-phospho-L-homoserine + ADP + H(+). Its pathway is amino-acid biosynthesis; L-threonine biosynthesis; L-threonine from L-aspartate: step 4/5. Its function is as follows. Catalyzes the ATP-dependent phosphorylation of L-homoserine to L-homoserine phosphate. The protein is Homoserine kinase of Escherichia coli O17:K52:H18 (strain UMN026 / ExPEC).